The following is a 346-amino-acid chain: MEEELKLFIQVWVSAIISVTYCYYLTPKIKTSLLRLLSVLPVCVLFLIIPIFFSTVHSSFTIAFFLSGLAVPKLILFALEKGPLFPLPPNLPHFVCFACFPIKLQKKPNPENTNHFPKWVFALKVFIFGALLLQAYHYKQFLSTNFLLGLYALHIYLELEISLTLIKFLVSITLGCDLEPQFNEPYLATSLHDFWGHRWNLMVSKILWLAVYNPIRQWRAKSSEWDRFFAIFATFLVSGVAHEILYFYLTREKPTWEVTWFFVLHGFCMAAEVALKRKTKLVQRWPVNPAVSRLLTVGFVFVTGVWLFSPQPIRHGLMERFINEDLFLIDFFNRKLYILLGLFTSL.

Helical transmembrane passes span 7–27 (LFIQ…YLTP), 36–56 (LLSV…FSTV), 59–79 (SFTI…LFAL), 116–136 (FPKW…LQAY), 146–166 (FLLG…LTLI), 228–248 (FFAI…LYFY), 255–275 (TWEV…EVAL), and 289–309 (PAVS…WLFS).

It belongs to the wax synthase family.

Its subcellular location is the membrane. The enzyme catalyses a long chain fatty alcohol + a fatty acyl-CoA = a wax ester + CoA. Functionally, catalyzes the final step in the synthesis of long-chain linear esters (waxes). The polypeptide is Probable long-chain-alcohol O-fatty-acyltransferase 6 (AT6) (Arabidopsis thaliana (Mouse-ear cress)).